Here is a 197-residue protein sequence, read N- to C-terminus: Ribosome maturation factor RimM (197 aa).

The PRC barrel domain occupies 92–164 (DEGWYEHELV…YILVTPPPGL (73 aa)). The segment at 167 to 197 (INVEDSGETSDAGESGPGEAEPGKAEAGDNA) is disordered. A compositionally biased stretch (low complexity) spans 176-186 (SDAGESGPGEA). The span at 187 to 197 (EPGKAEAGDNA) shows a compositional bias: basic and acidic residues.

The protein belongs to the RimM family. Binds ribosomal protein uS19.

It localises to the cytoplasm. An accessory protein needed during the final step in the assembly of 30S ribosomal subunit, possibly for assembly of the head region. Essential for efficient processing of 16S rRNA. May be needed both before and after RbfA during the maturation of 16S rRNA. It has affinity for free ribosomal 30S subunits but not for 70S ribosomes. This Arthrobacter sp. (strain FB24) protein is Ribosome maturation factor RimM.